The chain runs to 354 residues: Ferrochelatase (354 aa).

Positions 204 and 306 each coordinate Fe cation.

It belongs to the ferrochelatase family.

The protein localises to the cytoplasm. It catalyses the reaction heme b + 2 H(+) = protoporphyrin IX + Fe(2+). It participates in porphyrin-containing compound metabolism; protoheme biosynthesis; protoheme from protoporphyrin-IX: step 1/1. Functionally, catalyzes the ferrous insertion into protoporphyrin IX. This Coxiella burnetii (strain Dugway 5J108-111) protein is Ferrochelatase.